A 451-amino-acid chain; its full sequence is Deoxyguanosinetriphosphate triphosphohydrolase-like protein (451 aa).

Residues 61 to 274 (RLTHSLEVAQ…MELADDIAYG (214 aa)) enclose the HD domain.

Belongs to the dGTPase family. Type 2 subfamily.

This is Deoxyguanosinetriphosphate triphosphohydrolase-like protein from Actinobacillus succinogenes (strain ATCC 55618 / DSM 22257 / CCUG 43843 / 130Z).